Here is a 282-residue protein sequence, read N- to C-terminus: 4-hydroxy-tetrahydrodipicolinate reductase (282 aa).

12–17 provides a ligand contact to NAD(+); that stretch reads GVTGRM. Arginine 44 is an NADP(+) binding site. NAD(+) is bound by residues 107-109 and 131-134; these read GTT and SSNF. Histidine 164 serves as the catalytic Proton donor/acceptor. (S)-2,3,4,5-tetrahydrodipicolinate is bound at residue histidine 165. The active-site Proton donor is the lysine 168. 174–175 is a (S)-2,3,4,5-tetrahydrodipicolinate binding site; sequence GT.

Belongs to the DapB family. Homotetramer.

It localises to the cytoplasm. The enzyme catalyses (S)-2,3,4,5-tetrahydrodipicolinate + NAD(+) + H2O = (2S,4S)-4-hydroxy-2,3,4,5-tetrahydrodipicolinate + NADH + H(+). It carries out the reaction (S)-2,3,4,5-tetrahydrodipicolinate + NADP(+) + H2O = (2S,4S)-4-hydroxy-2,3,4,5-tetrahydrodipicolinate + NADPH + H(+). The protein operates within amino-acid biosynthesis; L-lysine biosynthesis via DAP pathway; (S)-tetrahydrodipicolinate from L-aspartate: step 4/4. Catalyzes the conversion of 4-hydroxy-tetrahydrodipicolinate (HTPA) to tetrahydrodipicolinate. This Blochmanniella pennsylvanica (strain BPEN) protein is 4-hydroxy-tetrahydrodipicolinate reductase.